A 399-amino-acid polypeptide reads, in one-letter code: Stomatin-like protein 1 (399 aa).

The short motif at G6 to L10 is the Tyrosine-type lysosomal sorting signal element. Phosphoserine is present on S28. The chain crosses the membrane as a helical; Signal-anchor for type III membrane protein span at residues L58–A78. The Cytoplasmic segment spans residues L79–K399. Residues K288 to K399 enclose the SCP2 domain.

This sequence belongs to the band 7/mec-2 family. In terms of assembly, interacts with STOM; may redistribute STOM from the plasma membrane to late endosomes. As to expression, expressed in dorsal root ganglion neurons.

The protein localises to the membrane. The protein resides in the cytoplasmic vesicle. It is found in the cell membrane. Its subcellular location is the late endosome membrane. It localises to the membrane raft. Functionally, may play a role in cholesterol transfer to late endosomes. May play a role in modulating membrane acid-sensing ion channels. Can specifically inhibit proton-gated current of ASIC1 isoform 1. Can increase inactivation speed of ASIC3. May be involved in regulation of proton sensing in dorsal root ganglions. The sequence is that of Stomatin-like protein 1 (Stoml1) from Mus musculus (Mouse).